Reading from the N-terminus, the 1215-residue chain is Cellulose synthase-like protein D4 (1215 aa).

Disordered stretches follow at residues 24-46 (GGDA…SLGS) and 206-231 (SDTD…ERDQ). Positions 207 to 222 (DTDESDSVTDDDDDEA) are enriched in acidic residues. The next 2 membrane-spanning stretches (helical) occupy residues 321-341 (AILS…GFFL) and 352-372 (AVWL…SWLL). Catalysis depends on residues Asp452 and Asp905. The next 6 helical transmembrane spans lie at 988–1008 (VFLL…KFIV), 1014–1034 (TFLA…LLEI), 1060–1080 (PAAV…SFTL), 1114–1134 (LMVP…VAAA), 1147–1167 (LLGG…FAKG), and 1177–1197 (TIVF…WVYI).

Belongs to the glycosyltransferase 2 family. Plant cellulose synthase-like D subfamily.

It is found in the golgi apparatus membrane. Functionally, thought to be a Golgi-localized beta-glycan synthase that polymerize the backbones of noncellulosic polysaccharides (hemicelluloses) of plant cell wall. This is Cellulose synthase-like protein D4 (CSLD4) from Oryza sativa subsp. japonica (Rice).